Here is a 702-residue protein sequence, read N- to C-terminus: Dynein intermediate chain 2, ciliary (702 aa).

The segment covering 1-11 (MPVKSTKTKGG) has biased composition (low complexity). 3 disordered regions span residues 1–64 (MPVK…IKPD), 128–226 (DEAR…FSST), and 243–272 (QEKAKEKKAAPSKKDDDKSKKKLTALETQS). Composition is skewed to basic and acidic residues over residues 36-52 (GKKDDDDATEAGEHGGE) and 152-176 (GEEKKEEDGEQKTEEPKEGEKRDEE). Polar residues predominate over residues 189 to 206 (KLTNQFNFSERASQTYNN). Basic and acidic residues predominate over residues 243–261 (QEKAKEKKAAPSKKDDDKS). 6 WD repeats span residues 380–420 (PTDS…ANPV), 429–472 (KHTD…LTYT), 490–533 (TQLT…QFLD), 537–577 (AHHM…GPMF), 580–620 (DLGS…YEPI), and 628–667 (KKKTKLTHITFNPNFPIVLVGDDRGYVSSLKLSPNLRKVP).

Belongs to the dynein intermediate chain family. In terms of assembly, consists of at least two heavy chains (alpha and beta), three intermediate chains and several light chains.

It is found in the cytoplasm. The protein localises to the cytoskeleton. The protein resides in the cilium axoneme. In terms of biological role, microtubule-binding protein that may be involved in dynein outer arm assembly on the axoneme. The protein is Dynein intermediate chain 2, ciliary of Heliocidaris crassispina (Sea urchin).